The sequence spans 340 residues: Major histocompatibility complex class I-related protein 1 (340 aa).

The signal sequence occupies residues 1–22; that stretch reads MGELTAFLLPLIIVLMVKHSNS. The alpha-1 stretch occupies residues 23–109; sequence RTHSLRYFRL…KRLQRHYNHS (87 aa). The interval 23 to 201 is antigen-binding cleft; the sequence is RTHSLRYFRL…EYGKDTLQRT (179 aa). Over 23 to 302 the chain is Extracellular; it reads RTHSLRYFRL…QESEAIPLVM (280 aa). Tyrosine 29 and arginine 31 together coordinate 8-(9H-purin-6-yl)-2-oxa-8-azabicyclo[3.3.1]nona-3,6-diene-4,6-dicarbaldehyde. 5-(2-oxoethylideneamino)-6-(D-ribitylamino)uracil-binding residues include arginine 31, serine 46, and lysine 65. 5-(2-oxopropylideneamino)-6-(D-ribitylamino)uracil is bound by residues arginine 31, serine 46, and lysine 65. The 7-hydroxy-6-methyl-8-(1-D-ribityl)lumazine site is built by arginine 31, serine 46, and lysine 65. Residues lysine 65 and histidine 80 each contribute to the 8-(9H-purin-6-yl)-2-oxa-8-azabicyclo[3.3.1]nona-3,6-diene-4,6-dicarbaldehyde site. Lysine 65 serves as a coordination point for 2-amino-4-oxopteridine-6-carbaldehyde. Lysine 65 contributes to the pyridoxal binding site. A glycan (N-linked (GlcNAc...) asparagine) is linked at asparagine 107. Positions 110 to 201 are alpha-2; sequence GSHTYQRMIG…EYGKDTLQRT (92 aa). Arginine 116 contacts 8-(9H-purin-6-yl)-2-oxa-8-azabicyclo[3.3.1]nona-3,6-diene-4,6-dicarbaldehyde. 5-(2-oxoethylideneamino)-6-(D-ribitylamino)uracil is bound by residues arginine 116, tyrosine 174, and glutamine 175. Positions 116, 174, and 175 each coordinate 5-(2-oxopropylideneamino)-6-(D-ribitylamino)uracil. Residues arginine 116, tyrosine 174, and glutamine 175 each contribute to the 7-hydroxy-6-methyl-8-(1-D-ribityl)lumazine site. 2 disulfides stabilise this stretch: cysteine 120–cysteine 183 and cysteine 222–cysteine 278. An alpha-3 region spans residues 202–293; that stretch reads EPPLVRVNRK…GVHVVLQVPQ (92 aa). Residues 203–282 form the Ig-like C1-type domain; the sequence is PPLVRVNRKE…SNLYSCHVEH (80 aa). Positions 294-302 are connecting peptide; it reads ESEAIPLVM. The helical transmembrane segment at 303 to 323 threads the bilayer; it reads KAVSGSIVFVIVLAGVGVLVW. Over 324-340 the chain is Cytoplasmic; sequence RRRPREQNGAVYLPTPD.

The protein belongs to the MHC class I family. As to quaternary structure, heterotrimer that consists of MR1, B2M and metabolite antigen. Major classes of metabolite ligands presented by MR1 include riboflavin-related antigens, pyrimidines and ribityl lumazines, nucleobase adducts and folate derivatives. Forms reversible covalent Schiff base complexes with microbial pyrimidine-based metabolite, which serves as a molecular switch triggering complete folding, stable association with B2M and translocation of the ternary complex from endoplasmic reticulum to the plasma membrane. Alternatively, forms non-Schiff base complexes with ribityl lumazines. On antigen-presenting cells, the ternary complex interacts with TCR on MR1-restricted T cells. Interacts with TAPBP and TAPBPL chaperones in the endoplasmic reticulum. TAPBP associated or not with MHC class I peptide loading complex binds ligand-free MR1 or MR1-B2M complex, providing for stable MR1 pools ready for metabolite antigen processing. TAPBPL interacts with MR1 in a ligand-independent way; this interaction may stabilize MR1 pool and facilitate ligand loading and dissociation. Structurally, MR1-B2M heterodimer adopts a topology similar to classical MHC class I molecules, with alpha-1 and alpha-2 domains of MR1 forming the antigen-binding cleft composed of two alpha-helices resting on a floor of 7-stranded anti-parallel beta-pleated sheet. MR1-B2M heterodimer (via alpha-helices) interacts with TCR (via CDR domains). Post-translationally, N-glycosylated.

The protein resides in the cell membrane. Its subcellular location is the endoplasmic reticulum membrane. The protein localises to the golgi apparatus membrane. It localises to the early endosome membrane. It is found in the late endosome membrane. Its function is as follows. Antigen-presenting molecule specialized in displaying microbial pyrimidine-based metabolites to alpha-beta T cell receptors (TCR) on innate-type mucosal-associated invariant T (MAIT) cells. In complex with B2M preferentially presents riboflavin-derived metabolites to semi-invariant TCRs on MAIT cells, guiding immune surveillance of the microbial metabolome at mucosal epithelial barriers. Signature pyrimidine-based microbial antigens are generated via non-enzymatic condensation of metabolite intermediates of the riboflavin pathway with by-products arising from other metabolic pathways such as glycolysis. Typical potent antigenic metabolites are 5-(2-oxoethylideneamino)-6-D-ribitylaminouracil (5-OE-RU) and 5-(2-oxopropylideneamino)-6-D-ribitylaminouracil (5-OP-RU), products of condensation of 5-amino-6-D-ribityaminouracil (5-A-RU) with glyoxal or methylglyoxal by-products, respectively. May present microbial antigens to various MAIT cell subsets, providing for unique recognition of diverse microbes, including pathogens that do not synthesize riboflavin. Upon antigen recognition, elicits rapid innate-type MAIT cell activation to eliminate pathogenic microbes by directly killing infected cells. During T cell development, drives thymic selection and post-thymic terminal differentiation of MAIT cells in a process dependent on commensal microflora. Acts as an immune sensor of cancer cell metabolome. May present a tumor-specific or -associated metabolite essential for cancer cell survival to a pan-cancer TCR on a non-MAIT CD8-positive T cell clone, triggering T cell-mediated killing of a wide range of cancer cell types. May present tumor-enriched pyridoxal and pyridoxal 5'-phosphate antigens, enabling preferential recognition of cancer cells. Presents nucleobase carbonyl adducts generated during oxidative stress. Captures M3Ade, a nucleobase adduct composed of one adenine modified by a malondialdehyde trimer, for recognition by MR1-restricted T cell clones expressing a polyclonal TCR repertoire. The chain is Major histocompatibility complex class I-related protein 1 from Pongo abelii (Sumatran orangutan).